We begin with the raw amino-acid sequence, 317 residues long: MRAAAAGGGVRTAALALLLGALHWAPARCEEYDYYGWQAEPLHGRSYSKPPQCLDIPADLPLCHTVGYKRMRLPNLLEHESLAEVKQQASSWLPLLAKRCHSDTQVFLCSLFAPVCLDRPIYPCRSLCEAVRAGCAPLMEAYGFPWPEMLHCHKFPLDNDLCIAVQFGHLPATAPPVTKICAQCEMEHSADGLMEQMCSSDFVVKMRIKEIKIENGDRKLIGAQKKKKLLKPGPLKRKDTKRLVLHMKNGAGCPCPQLDSLAGSFLVMGRKVDGQLLLMAVYRWDKKNKEMKFAVKFMFSYPCSLYYPFFYGAAEPH.

The first 29 residues, 1-29 (MRAAAAGGGVRTAALALLLGALHWAPARC), serve as a signal peptide directing secretion. The FZ domain maps to 48 to 165 (SKPPQCLDIP…PLDNDLCIAV (118 aa)). Disulfide bonds link Cys-53–Cys-116, Cys-63–Cys-109, Cys-100–Cys-135, Cys-124–Cys-162, Cys-128–Cys-152, Cys-181–Cys-253, Cys-184–Cys-255, and Cys-198–Cys-303. The 123-residue stretch at 181–303 (CAQCEMEHSA…AVKFMFSYPC (123 aa)) folds into the NTR domain.

The protein belongs to the secreted frizzled-related protein (sFRP) family. Highly expressed in the retinal pigment epithelium (RPE) and pancreas. Weak expression in heart, liver and muscle.

The protein resides in the secreted. Its function is as follows. Soluble frizzled-related proteins (sFRPS) function as modulators of Wnt signaling through direct interaction with Wnts. They have a role in regulating cell growth and differentiation in specific cell types. SFRP5 may be involved in determining the polarity of photoreceptor, and perhaps, other cells in the retina. In Homo sapiens (Human), this protein is Secreted frizzled-related protein 5 (SFRP5).